A 314-amino-acid polypeptide reads, in one-letter code: Ketimine reductase mu-crystallin (314 aa).

Arg-47 serves as a coordination point for 3,3',5-triiodo-L-thyronine. NADPH is bound by residues Ser-91, His-92, Arg-119, Ala-144, Val-146, Gln-147, Asn-168, Arg-169, Thr-170, Asn-173, Thr-205, and Met-206. Residue Glu-257 participates in 3,3',5-triiodo-L-thyronine binding. NADPH is bound at residue Ser-292.

This sequence belongs to the ornithine cyclodeaminase/mu-crystallin family. In terms of assembly, homodimer. Binds the thyroid hormone triiodothyronine (T3); T3 binding inhibits enzymatic activity.

It is found in the cytoplasm. The catalysed reaction is L-pipecolate + NAD(+) = Delta(1)-piperideine-2-carboxylate + NADH + H(+). It carries out the reaction L-pipecolate + NADP(+) = Delta(1)-piperideine-2-carboxylate + NADPH + H(+). The enzyme catalyses L-proline + NADP(+) = 1-pyrroline-2-carboxylate + NADPH + H(+). It catalyses the reaction L-proline + NAD(+) = 1-pyrroline-2-carboxylate + NADH + H(+). The catalysed reaction is (3R)-1,4-thiomorpholine-3-carboxylate + NAD(+) = 3,4-dehydrothiomorpholine-3-carboxylate + NADH + 2 H(+). It carries out the reaction (3R)-1,4-thiomorpholine-3-carboxylate + NADP(+) = 3,4-dehydrothiomorpholine-3-carboxylate + NADPH + 2 H(+). The enzyme catalyses (S)-cystathionine ketimine + NADH + 2 H(+) = (3R,5S)-2,3,5,6,7-pentahydro-1,4-thiazepine-3,5-dicarboxylate + NAD(+). It catalyses the reaction (S)-cystathionine ketimine + NADPH + 2 H(+) = (3R,5S)-2,3,5,6,7-pentahydro-1,4-thiazepine-3,5-dicarboxylate + NADP(+). The catalysed reaction is (R)-lanthionine ketimine + NADPH + 2 H(+) = (3R,5R)-1,4-thiomorpholine-3,5-dicarboxylate + NADP(+). It carries out the reaction Delta(2)-thiazoline-2-carboxylate + NADPH + 2 H(+) = L-thiazolidine-2-carboxylate + NADP(+). In terms of biological role, catalyzes the NAD(P)H-dependent reduction of imine double bonds of a number of cyclic ketimine substrates, including sulfur-containing cyclic ketimines. Under physiological conditions, it efficiently catalyzes delta(1)-piperideine-2-carboxylate (P2C) and delta(1)-pyrroline-2-carboxylate (Pyr2C) reduction, suggesting a central role in lysine and glutamate metabolism. Additional substrates are (S)-cystathionine ketimine (CysK), 3,4-dehydrothiomorpholine-3-carboxylate (AECK), and (R)-lanthionine ketimine (LK) that is reduced at very low rate compared to other substrates. Also catalyzes the NAD(P)H-dependent reduction of delta(2)-thiazoline-2-carboxylate (T2C). This Bos taurus (Bovine) protein is Ketimine reductase mu-crystallin (CRYM).